The following is a 533-amino-acid chain: Death domain-containing ATP nucleosidase (533 aa).

Residues 1-262 (MDAAAIISLL…TAAGKEEKVS (262 aa)) form a death domain region. A disordered region spans residues 184–248 (STFVSDDATQ…TQTSTNSFNS (65 aa)). Positions 218-227 (PSAQVNQPPT) are enriched in polar residues. Low complexity predominate over residues 236–248 (SGSTQTSTNSFNS). Residues 263 to 533 (DDVTKGIKFL…HLDDDRTIHM (271 aa)) are purine nucleoside phosphorylase domain.

It catalyses the reaction ATP + H2O = D-ribose 5-triphosphate + adenine. The enzyme catalyses dATP + H2O = 2-deoxyribose 5-triphosphate + adenine. In terms of biological role, the C-terminal purine nucleoside phosphorylase (PNP) domain cleaves the N-glycosidic bond of ATP, and to a lesser extent dATP, to release adenine and a sugar triphosphate; has weak activity on ADP and AMP and no activity on dADP, dAMP, adenosine, deoxyadenosine or other (d)NTPs. The chain is Death domain-containing ATP nucleosidase (109585858) from Amphimedon queenslandica (Sponge).